A 447-amino-acid polypeptide reads, in one-letter code: Tubulin beta chain (447 aa).

GTP contacts are provided by Gln-11, Glu-69, Ser-138, Gly-142, Thr-143, Gly-144, Asn-204, and Asn-226. A Mg(2+)-binding site is contributed by Glu-69.

It belongs to the tubulin family. As to quaternary structure, dimer of alpha and beta chains. A typical microtubule is a hollow water-filled tube with an outer diameter of 25 nm and an inner diameter of 15 nM. Alpha-beta heterodimers associate head-to-tail to form protofilaments running lengthwise along the microtubule wall with the beta-tubulin subunit facing the microtubule plus end conferring a structural polarity. Microtubules usually have 13 protofilaments but different protofilament numbers can be found in some organisms and specialized cells. Requires Mg(2+) as cofactor.

It is found in the cytoplasm. The protein localises to the cytoskeleton. Functionally, tubulin is the major constituent of microtubules, a cylinder consisting of laterally associated linear protofilaments composed of alpha- and beta-tubulin heterodimers. Microtubules grow by the addition of GTP-tubulin dimers to the microtubule end, where a stabilizing cap forms. Below the cap, tubulin dimers are in GDP-bound state, owing to GTPase activity of alpha-tubulin. The sequence is that of Tubulin beta chain from Trichophyton rubrum (Athlete's foot fungus).